Reading from the N-terminus, the 85-residue chain is Large ribosomal subunit protein bL27 (85 aa).

The segment at 1 to 27 (MAHKKAGGSTKNGRDSQSKRLGVKRYG) is disordered.

Belongs to the bacterial ribosomal protein bL27 family.

This chain is Large ribosomal subunit protein bL27, found in Halorhodospira halophila (strain DSM 244 / SL1) (Ectothiorhodospira halophila (strain DSM 244 / SL1)).